A 121-amino-acid polypeptide reads, in one-letter code: Large ribosomal subunit protein uL18 (121 aa).

It belongs to the universal ribosomal protein uL18 family. In terms of assembly, part of the 50S ribosomal subunit; part of the 5S rRNA/L5/L18/L25 subcomplex. Contacts the 5S and 23S rRNAs.

In terms of biological role, this is one of the proteins that bind and probably mediate the attachment of the 5S RNA into the large ribosomal subunit, where it forms part of the central protuberance. The polypeptide is Large ribosomal subunit protein uL18 (Verminephrobacter eiseniae (strain EF01-2)).